A 160-amino-acid polypeptide reads, in one-letter code: Ribosomal RNA large subunit methyltransferase H (160 aa).

S-adenosyl-L-methionine-binding positions include L76, G108, and 127 to 132; that span reads FGFMTW.

This sequence belongs to the RNA methyltransferase RlmH family. In terms of assembly, homodimer.

The protein resides in the cytoplasm. The catalysed reaction is pseudouridine(1915) in 23S rRNA + S-adenosyl-L-methionine = N(3)-methylpseudouridine(1915) in 23S rRNA + S-adenosyl-L-homocysteine + H(+). Functionally, specifically methylates the pseudouridine at position 1915 (m3Psi1915) in 23S rRNA. The sequence is that of Ribosomal RNA large subunit methyltransferase H from Bartonella henselae (strain ATCC 49882 / DSM 28221 / CCUG 30454 / Houston 1) (Rochalimaea henselae).